The primary structure comprises 226 residues: DELTA-alicitoxin-Pse1b (226 aa).

Positions 1–21 are cleaved as a signal peptide; the sequence is MRHFVVFLYMFLALSIPTAFA. Residues 22 to 45 constitute a propeptide that is removed on maturation; the sequence is KKHIVTKKGNHQDITNDNEGENAE. The segment at 50–59 is plays an important role in the hemolytic activity; the sequence is TVAGAVIAGG. The interval 58-77 is N-terminal region; sequence GGELALKILTKILYEIGKID. Phosphocholine-binding residues include Ser-101, Val-134, Ser-152, Pro-154, Tyr-180, and Tyr-184. Residues 152–167 form a trp-rich region, which is important for the binding to lipid membrane region; the sequence is SVPFDYNLYSNWWNVK.

Belongs to the actinoporin family. Sea anemone subfamily. Octamer or nonamer in membranes. Monomer in the soluble state.

Its subcellular location is the secreted. It localises to the nematocyst. It is found in the target cell membrane. Its function is as follows. Pore-forming protein that forms cations-selective hydrophilic pores of around 1 nm and causes cytolysis. Pore formation is a multi-step process that involves specific recognition of membrane sphingomyelin (but neither cholesterol nor phosphatidylcholine) using aromatic rich region and adjacent phosphocholine (POC) binding site, firm binding to the membrane (mainly driven by hydrophobic interactions) accompanied by the transfer of the N-terminal region to the lipid-water interface and finally pore formation after oligomerization of monomers. This Phyllodiscus semoni (Night anemone) protein is DELTA-alicitoxin-Pse1b.